The primary structure comprises 459 residues: MDLDTITSISTPMGEGAIGIVRLSGPQAVEIADKLYKGKHLLNDVPSHTINYGHIIDPESKEVVEEVMVSVLRAPKTFTREDIIEINCHGGILTINRVLELTMTYGARMAEPGEFTKRAFLNGRIDLSQAEAVMDFIRSKTDRASKVAMNQIEGRLSDLIKKQRQSILEILAQVEVNIDYPEYDDVEDATTEFLLEQSKEIKQEINRLLDTGAQGKIMREGLSTVIVGKPNVGKSSMLNNLIQDNKAIVTEVAGTTRDVLEEYVNVRSVPLRLVDTAGIRETEDIVEKIGVERSRKALSQADLILFVLNNNEALTQEDYTLYEVVKNEDVIVIVNKMDLEQNIDINEVKDMIGDTPLIQTSMLKQEGIDELEIQIRDLFFGGEVQNQDMTYVSNSRHISLLKQARQTIQDAIDAAESGVPMDMVQIDLTRTWEILGEIIGETASDELIDQLFSQFCLGK.

(6S)-5-formyl-5,6,7,8-tetrahydrofolate is bound by residues Arg-22, Glu-85, and Arg-124. Positions 221–380 (GLSTVIVGKP…LEIQIRDLFF (160 aa)) constitute a TrmE-type G domain. Residue Asn-231 participates in K(+) binding. GTP is bound by residues 231–236 (NVGKSS), 250–256 (TEVAGTT), and 275–278 (DTAG). Ser-235 is a binding site for Mg(2+). 3 residues coordinate K(+): Thr-250, Val-252, and Thr-255. Thr-256 lines the Mg(2+) pocket. Residue Lys-459 participates in (6S)-5-formyl-5,6,7,8-tetrahydrofolate binding.

Belongs to the TRAFAC class TrmE-Era-EngA-EngB-Septin-like GTPase superfamily. TrmE GTPase family. In terms of assembly, homodimer. Heterotetramer of two MnmE and two MnmG subunits. K(+) serves as cofactor.

Its subcellular location is the cytoplasm. Exhibits a very high intrinsic GTPase hydrolysis rate. Involved in the addition of a carboxymethylaminomethyl (cmnm) group at the wobble position (U34) of certain tRNAs, forming tRNA-cmnm(5)s(2)U34. The sequence is that of tRNA modification GTPase MnmE from Staphylococcus aureus (strain Mu3 / ATCC 700698).